A 254-amino-acid chain; its full sequence is Protein Thf1 (254 aa).

Residues 182-241 (EEKMKKDLDLYRSNLEKMNQVLEVLEDALAVERQRREKAEAEAKAKTAEATVATETNDEQ) are a coiled coil. Residues 215 to 228 (QRREKAEAEAKAKT) show a composition bias toward basic and acidic residues. Residues 215–254 (QRREKAEAEAKAKTAEATVATETNDEQDEQKETSESGSDA) form a disordered region.

Belongs to the THF1 family.

Functionally, may be involved in photosynthetic membrane biogenesis. The chain is Protein Thf1 from Picosynechococcus sp. (strain ATCC 27264 / PCC 7002 / PR-6) (Agmenellum quadruplicatum).